The primary structure comprises 259 residues: Pyrroloquinoline-quinone synthase (259 aa).

It belongs to the PqqC family.

It carries out the reaction 6-(2-amino-2-carboxyethyl)-7,8-dioxo-1,2,3,4,7,8-hexahydroquinoline-2,4-dicarboxylate + 3 O2 = pyrroloquinoline quinone + 2 H2O2 + 2 H2O + H(+). It participates in cofactor biosynthesis; pyrroloquinoline quinone biosynthesis. In terms of biological role, ring cyclization and eight-electron oxidation of 3a-(2-amino-2-carboxyethyl)-4,5-dioxo-4,5,6,7,8,9-hexahydroquinoline-7,9-dicarboxylic-acid to PQQ. This chain is Pyrroloquinoline-quinone synthase, found in Bradyrhizobium diazoefficiens (strain JCM 10833 / BCRC 13528 / IAM 13628 / NBRC 14792 / USDA 110).